We begin with the raw amino-acid sequence, 169 residues long: MATLTEDDVLEQLDAQDNLFSFMKTAHSILLQGIRQFLPSLFVDNDEEIVEYAVKPLLAQSGPLDDIDVALRLIYALGKMDKWLYADITHFSQYWHYLNEQDETPGFADDITWDFISNVNSITRNATLYDALKAMKFADFAVWSEARFSGMVKTALTLAVTTTLKELTP.

It belongs to the MtlR/FumE family. In terms of assembly, homodimer.

It carries out the reaction (S)-malate = fumarate + H2O. In terms of biological role, in vitro catalyzes the addition of water to fumarate, forming malate. Cannot catalyze the reverse reaction. Cannot use the cis-isomer maleate as substrate. This Shigella flexneri protein is Fumarase E.